The sequence spans 180 residues: ATP synthase subunit delta (180 aa).

It belongs to the ATPase delta chain family. As to quaternary structure, F-type ATPases have 2 components, F(1) - the catalytic core - and F(0) - the membrane proton channel. F(1) has five subunits: alpha(3), beta(3), gamma(1), delta(1), epsilon(1). F(0) has three main subunits: a(1), b(2) and c(10-14). The alpha and beta chains form an alternating ring which encloses part of the gamma chain. F(1) is attached to F(0) by a central stalk formed by the gamma and epsilon chains, while a peripheral stalk is formed by the delta and b chains.

Its subcellular location is the cell inner membrane. Its function is as follows. F(1)F(0) ATP synthase produces ATP from ADP in the presence of a proton or sodium gradient. F-type ATPases consist of two structural domains, F(1) containing the extramembraneous catalytic core and F(0) containing the membrane proton channel, linked together by a central stalk and a peripheral stalk. During catalysis, ATP synthesis in the catalytic domain of F(1) is coupled via a rotary mechanism of the central stalk subunits to proton translocation. This protein is part of the stalk that links CF(0) to CF(1). It either transmits conformational changes from CF(0) to CF(1) or is implicated in proton conduction. This Cupriavidus necator (strain ATCC 17699 / DSM 428 / KCTC 22496 / NCIMB 10442 / H16 / Stanier 337) (Ralstonia eutropha) protein is ATP synthase subunit delta.